A 361-amino-acid chain; its full sequence is MERAAAGPLGMEMPIMHDGDRYELVKEIGSGNFGVARLMRNRASGDLVAVKYIDRGEKIDENVQREIINHRSLRHPNIIRFKEVILTPTHLAIVMEYASGGELFERICSAGRFSEDEARFFFQQLISGVSYCHSMQVCHRDLKLENTLLDGSTAPRLKICDFGYSKSSVLHSQPKSTVGTPAYIAPEVLLKKEYDGKIADVWSCGVTLYVMLVGAYPFEDPEDPKNFRKTIQKILGVQYSIPDYVHISPECRDLITRIFVGNPASRITMPEIKNHPWFMKNIPADLMDDGMVSNQYEEPDQPMQNMNEIMQILAEATIPAAGTSGINQFLTDSLDLDDDMEDMDSDLDLDIESSGEIVYAM.

The Protein kinase domain maps to 22 to 278 (YELVKEIGSG…MPEIKNHPWF (257 aa)). ATP is bound by residues 28 to 36 (IGSGNFGVA) and Lys51. The Proton acceptor role is filled by Asp141.

Belongs to the protein kinase superfamily. Ser/Thr protein kinase family. As to quaternary structure, interacts with BZIP46. May be phosphorylated. As to expression, expressed in leaf sheaths and roots. Expressed in shoots of young seedlings.

Its subcellular location is the cytoplasm. It localises to the nucleus. The enzyme catalyses L-seryl-[protein] + ATP = O-phospho-L-seryl-[protein] + ADP + H(+). It catalyses the reaction L-threonyl-[protein] + ATP = O-phospho-L-threonyl-[protein] + ADP + H(+). With respect to regulation, activated by hyperosmotic stress and abscisic acid (ABA). In terms of biological role, may play a role in signal transduction of hyperosmotic response. Can phosphorylate BZIP46 in vitro. This Oryza sativa subsp. japonica (Rice) protein is Serine/threonine-protein kinase SAPK9 (SAPK9).